Here is a 111-residue protein sequence, read N- to C-terminus: Nucleoid-associated protein Cpha266_1171 (111 aa).

Belongs to the YbaB/EbfC family. In terms of assembly, homodimer.

It is found in the cytoplasm. The protein resides in the nucleoid. In terms of biological role, binds to DNA and alters its conformation. May be involved in regulation of gene expression, nucleoid organization and DNA protection. The sequence is that of Nucleoid-associated protein Cpha266_1171 from Chlorobium phaeobacteroides (strain DSM 266 / SMG 266 / 2430).